A 146-amino-acid polypeptide reads, in one-letter code: Hemoglobin subunit beta (146 aa).

Val1 is subject to N-acetylvaline. One can recognise a Globin domain in the interval 2 to 146 (HLTGEEKSAV…VANALAHKYH (145 aa)). Thr12 bears the Phosphothreonine mark. Ser44 carries the phosphoserine modification. N6-acetyllysine is present on Lys59. Heme b is bound at residue His63. Position 82 is an N6-acetyllysine (Lys82). His92 provides a ligand contact to heme b. Cys93 is subject to S-nitrosocysteine. Lys144 is modified (N6-acetyllysine).

Belongs to the globin family. In terms of assembly, heterotetramer of two alpha chains and two beta chains. In terms of tissue distribution, red blood cells.

Functionally, involved in oxygen transport from the lung to the various peripheral tissues. This Loris tardigradus (Slender loris) protein is Hemoglobin subunit beta (HBB).